The sequence spans 321 residues: Viral T-cell receptor beta chain-like T17T-22 (321 aa).

An N-terminal signal peptide occupies residues 1–28; it reads MISWLPSVAMGSRLLCCVALCLLGAGPA. Positions 29-122 are v segment; it reads DSGLTQTPRH…DSALYLCASS (94 aa). N-linked (GlcNAc...) asparagine; by host glycosylation occurs at N105. The tract at residues 123 to 128 is d segment; that stretch reads PNEDSE. The interval 129 to 144 is j segment; it reads YGETLYFGEGSRLTVV. The tract at residues 145-321 is c region; sequence EDLKKVSPPK…LMAKVKRKDS (177 aa). 2 N-linked (GlcNAc...) asparagine; by host glycosylation sites follow: N214 and N264.

This Feline leukemia virus protein is Viral T-cell receptor beta chain-like T17T-22 (V-TCR).